Reading from the N-terminus, the 250-residue chain is tRNA (guanine-N(1)-)-methyltransferase (250 aa).

Residues Gly116 and 136–141 (IGDYVL) contribute to the S-adenosyl-L-methionine site.

Belongs to the RNA methyltransferase TrmD family. In terms of assembly, homodimer.

Its subcellular location is the cytoplasm. It catalyses the reaction guanosine(37) in tRNA + S-adenosyl-L-methionine = N(1)-methylguanosine(37) in tRNA + S-adenosyl-L-homocysteine + H(+). In terms of biological role, specifically methylates guanosine-37 in various tRNAs. The protein is tRNA (guanine-N(1)-)-methyltransferase of Stutzerimonas stutzeri (strain A1501) (Pseudomonas stutzeri).